A 683-amino-acid polypeptide reads, in one-letter code: Methionine--tRNA ligase (683 aa).

Residues 15-25 carry the 'HIGH' region motif; that stretch reads PYANGSIHLGH. Zn(2+) contacts are provided by cysteine 146, cysteine 149, cysteine 159, and cysteine 162. The 'KMSKS' region motif lies at 332 to 336; the sequence is KMSKS. Lysine 335 is a binding site for ATP. One can recognise a tRNA-binding domain in the interval 582 to 683; the sequence is DFAKVDLRIA…QGAQAGMRVM (102 aa).

It belongs to the class-I aminoacyl-tRNA synthetase family. MetG type 1 subfamily. Homodimer. It depends on Zn(2+) as a cofactor.

The protein localises to the cytoplasm. The catalysed reaction is tRNA(Met) + L-methionine + ATP = L-methionyl-tRNA(Met) + AMP + diphosphate. Functionally, is required not only for elongation of protein synthesis but also for the initiation of all mRNA translation through initiator tRNA(fMet) aminoacylation. This is Methionine--tRNA ligase from Vibrio cholerae serotype O1 (strain ATCC 39315 / El Tor Inaba N16961).